A 360-amino-acid polypeptide reads, in one-letter code: Peptide chain release factor 1 (360 aa).

Gln235 bears the N5-methylglutamine mark. A compositionally biased stretch (basic and acidic residues) spans 285–295; sequence RQAAEQTDMRR. Positions 285-309 are disordered; the sequence is RQAAEQTDMRRNLLGSGDRSDKIRT.

This sequence belongs to the prokaryotic/mitochondrial release factor family. In terms of processing, methylated by PrmC. Methylation increases the termination efficiency of RF1.

The protein localises to the cytoplasm. In terms of biological role, peptide chain release factor 1 directs the termination of translation in response to the peptide chain termination codons UAG and UAA. This chain is Peptide chain release factor 1 (prfA), found in Haemophilus influenzae (strain ATCC 51907 / DSM 11121 / KW20 / Rd).